Here is a 193-residue protein sequence, read N- to C-terminus: Ion-translocating oxidoreductase complex subunit A (193 aa).

A run of 6 helical transmembrane segments spans residues 5–25, 39–59, 72–92, 102–122, 134–154, and 171–191; these read ILLI…FLGL, IGMG…AYLV, LRTL…EMVI, LLGI…VALL, VIYG…FAAL, and SIAL…SGLV.

It belongs to the NqrDE/RnfAE family. In terms of assembly, the complex is composed of six subunits: RnfA, RnfB, RnfC, RnfD, RnfE and RnfG.

The protein localises to the cell inner membrane. Functionally, part of a membrane-bound complex that couples electron transfer with translocation of ions across the membrane. This is Ion-translocating oxidoreductase complex subunit A from Histophilus somni (strain 129Pt) (Haemophilus somnus).